A 481-amino-acid chain; its full sequence is Protein nucleotidyltransferase YdiU (481 aa).

Residues Gly85, Gly87, Arg88, Lys108, Asp120, Gly121, Arg172, and Arg179 each coordinate ATP. Catalysis depends on Asp248, which acts as the Proton acceptor. Asn249 and Asp258 together coordinate Mg(2+). ATP is bound at residue Asp258.

The protein belongs to the SELO family. The cofactor is Mg(2+). Mn(2+) serves as cofactor.

It catalyses the reaction L-seryl-[protein] + ATP = 3-O-(5'-adenylyl)-L-seryl-[protein] + diphosphate. The catalysed reaction is L-threonyl-[protein] + ATP = 3-O-(5'-adenylyl)-L-threonyl-[protein] + diphosphate. It carries out the reaction L-tyrosyl-[protein] + ATP = O-(5'-adenylyl)-L-tyrosyl-[protein] + diphosphate. The enzyme catalyses L-histidyl-[protein] + UTP = N(tele)-(5'-uridylyl)-L-histidyl-[protein] + diphosphate. It catalyses the reaction L-seryl-[protein] + UTP = O-(5'-uridylyl)-L-seryl-[protein] + diphosphate. The catalysed reaction is L-tyrosyl-[protein] + UTP = O-(5'-uridylyl)-L-tyrosyl-[protein] + diphosphate. Functionally, nucleotidyltransferase involved in the post-translational modification of proteins. It can catalyze the addition of adenosine monophosphate (AMP) or uridine monophosphate (UMP) to a protein, resulting in modifications known as AMPylation and UMPylation. This is Protein nucleotidyltransferase YdiU from Cereibacter sphaeroides (strain ATCC 17023 / DSM 158 / JCM 6121 / CCUG 31486 / LMG 2827 / NBRC 12203 / NCIMB 8253 / ATH 2.4.1.) (Rhodobacter sphaeroides).